The primary structure comprises 332 residues: Glycerol-3-phosphate dehydrogenase [NAD(P)+] (332 aa).

The NADPH site is built by Trp11, Arg30, and Lys108. Residues Lys108, Gly137, and Ser139 each contribute to the sn-glycerol 3-phosphate site. Ala141 is a binding site for NADPH. Positions 192, 245, 255, 256, and 257 each coordinate sn-glycerol 3-phosphate. Lys192 acts as the Proton acceptor in catalysis. Arg256 contributes to the NADPH binding site. Residues Val280 and Glu282 each contribute to the NADPH site.

It belongs to the NAD-dependent glycerol-3-phosphate dehydrogenase family.

Its subcellular location is the cytoplasm. The enzyme catalyses sn-glycerol 3-phosphate + NAD(+) = dihydroxyacetone phosphate + NADH + H(+). The catalysed reaction is sn-glycerol 3-phosphate + NADP(+) = dihydroxyacetone phosphate + NADPH + H(+). It functions in the pathway membrane lipid metabolism; glycerophospholipid metabolism. Its function is as follows. Catalyzes the reduction of the glycolytic intermediate dihydroxyacetone phosphate (DHAP) to sn-glycerol 3-phosphate (G3P), the key precursor for phospholipid synthesis. The polypeptide is Glycerol-3-phosphate dehydrogenase [NAD(P)+] (Burkholderia orbicola (strain MC0-3)).